Consider the following 149-residue polypeptide: Ribosome maturation factor RimP (149 aa).

This sequence belongs to the RimP family.

Its subcellular location is the cytoplasm. Its function is as follows. Required for maturation of 30S ribosomal subunits. The polypeptide is Ribosome maturation factor RimP (Clostridium acetobutylicum (strain ATCC 824 / DSM 792 / JCM 1419 / IAM 19013 / LMG 5710 / NBRC 13948 / NRRL B-527 / VKM B-1787 / 2291 / W)).